The primary structure comprises 608 residues: Glutamine--fructose-6-phosphate aminotransferase [isomerizing] (608 aa).

The active-site Nucleophile; for GATase activity is the Cys2. Residues 2–217 (CGIVGILGRE…DGDWVVLTRN (216 aa)) form the Glutamine amidotransferase type-2 domain. SIS domains lie at 284–423 (LPFD…ARGE) and 456–598 (LARE…VDQP). Lys603 acts as the For Fru-6P isomerization activity in catalysis.

As to quaternary structure, homodimer.

The protein localises to the cytoplasm. It carries out the reaction D-fructose 6-phosphate + L-glutamine = D-glucosamine 6-phosphate + L-glutamate. Catalyzes the first step in hexosamine metabolism, converting fructose-6P into glucosamine-6P using glutamine as a nitrogen source. The protein is Glutamine--fructose-6-phosphate aminotransferase [isomerizing] (glmS) of Bradyrhizobium diazoefficiens (strain JCM 10833 / BCRC 13528 / IAM 13628 / NBRC 14792 / USDA 110).